The sequence spans 400 residues: NADH-quinone oxidoreductase subunit D (400 aa).

This sequence belongs to the complex I 49 kDa subunit family. NDH-1 is composed of 14 different subunits. Subunits NuoB, C, D, E, F, and G constitute the peripheral sector of the complex.

The protein localises to the cell inner membrane. It catalyses the reaction a quinone + NADH + 5 H(+)(in) = a quinol + NAD(+) + 4 H(+)(out). NDH-1 shuttles electrons from NADH, via FMN and iron-sulfur (Fe-S) centers, to quinones in the respiratory chain. The immediate electron acceptor for the enzyme in this species is believed to be ubiquinone. Couples the redox reaction to proton translocation (for every two electrons transferred, four hydrogen ions are translocated across the cytoplasmic membrane), and thus conserves the redox energy in a proton gradient. The chain is NADH-quinone oxidoreductase subunit D from Granulibacter bethesdensis (strain ATCC BAA-1260 / CGDNIH1).